The chain runs to 270 residues: Chymotrypsin-like elastase family member 3A (270 aa).

A signal peptide (or 16) is located at residues Met1–Ala15. The propeptide at Ser16–Arg28 is activation peptide. Residues Val29–Ala268 enclose the Peptidase S1 domain. The cysteines at positions 58 and 74 are disulfide-linked. His73 acts as the Charge relay system in catalysis. N-linked (GlcNAc...) asparagine glycosylation occurs at Asn114. The cysteines at positions 117 and 120 are disulfide-linked. Asp123 serves as the catalytic Charge relay system. Disulfide bonds link Cys157/Cys223, Cys188/Cys204, and Cys213/Cys244. Ser217 serves as the catalytic Charge relay system.

Belongs to the peptidase S1 family. Elastase subfamily.

The enzyme catalyses Preferential cleavage: Ala-|-Xaa. Does not hydrolyze elastin.. In terms of biological role, efficient protease with alanine specificity but only little elastolytic activity. This is Chymotrypsin-like elastase family member 3A (CELA3A) from Homo sapiens (Human).